Here is a 208-residue protein sequence, read N- to C-terminus: MRKTLTALMLSLPLLTPHMAFADESSVLKAKLTEIATLKAKFEQTVTDINNKQIQKGSGIFALAYPNQFYWHLTAPDESLIVADGTDVWIYNPFAEEVSVMDLNQAISASPIALLVHRDEETWSQYSVTSDNGCFNIKPKSIDAGVESVKVCFDDKTLTEMVLQDQQGNVSQFTLSEQTAIDDAERAMFKFTVPDDVDIDDQRLNAIN.

The N-terminal stretch at 1–22 is a signal peptide; it reads MRKTLTALMLSLPLLTPHMAFA.

It belongs to the LolA family. In terms of assembly, monomer.

The protein localises to the periplasm. Functionally, participates in the translocation of lipoproteins from the inner membrane to the outer membrane. Only forms a complex with a lipoprotein if the residue after the N-terminal Cys is not an aspartate (The Asp acts as a targeting signal to indicate that the lipoprotein should stay in the inner membrane). This chain is Outer-membrane lipoprotein carrier protein, found in Shewanella woodyi (strain ATCC 51908 / MS32).